The sequence spans 435 residues: Trigger factor (435 aa).

Residues 164-249 (GDFAKFDFEG…LHEIQGKKAG (86 aa)) form the PPIase FKBP-type domain.

Belongs to the FKBP-type PPIase family. Tig subfamily.

The protein localises to the cytoplasm. The catalysed reaction is [protein]-peptidylproline (omega=180) = [protein]-peptidylproline (omega=0). Functionally, involved in protein export. Acts as a chaperone by maintaining the newly synthesized protein in an open conformation. Functions as a peptidyl-prolyl cis-trans isomerase. The chain is Trigger factor from Campylobacter fetus subsp. fetus (strain 82-40).